Here is a 464-residue protein sequence, read N- to C-terminus: NADH-quinone oxidoreductase subunit N (464 aa).

A run of 13 helical transmembrane segments spans residues 5–25 (MLLA…VLFL), 31–51 (LLSA…PASL), 63–83 (LFAR…CLLS), 96–116 (EYAA…ASTS), 117–137 (LVSL…LIAV), 152–172 (LLPG…VYAA), 188–208 (GAPM…AAAF), 242–262 (VFAV…RPLL), 286–303 (MLAY…LAVL), 312–332 (AGLF…GLLA), 358–378 (AVLL…AGFM), 393–415 (VGLV…RPVL), and 436–456 (LIFV…GPFF).

The protein belongs to the complex I subunit 2 family. NDH-1 is composed of 14 different subunits. Subunits NuoA, H, J, K, L, M, N constitute the membrane sector of the complex.

The protein localises to the cell inner membrane. The enzyme catalyses a quinone + NADH + 5 H(+)(in) = a quinol + NAD(+) + 4 H(+)(out). NDH-1 shuttles electrons from NADH, via FMN and iron-sulfur (Fe-S) centers, to quinones in the respiratory chain. The immediate electron acceptor for the enzyme in this species is believed to be ubiquinone. Couples the redox reaction to proton translocation (for every two electrons transferred, four hydrogen ions are translocated across the cytoplasmic membrane), and thus conserves the redox energy in a proton gradient. This Syntrophotalea carbinolica (strain DSM 2380 / NBRC 103641 / GraBd1) (Pelobacter carbinolicus) protein is NADH-quinone oxidoreductase subunit N.